A 376-amino-acid polypeptide reads, in one-letter code: Succinyl-diaminopimelate desuccinylase (376 aa).

Residue His-67 participates in Zn(2+) binding. Residue Asp-69 is part of the active site. Asp-100 contacts Zn(2+). Glu-134 (proton acceptor) is an active-site residue. Zn(2+)-binding residues include Glu-135, Glu-163, and His-349.

The protein belongs to the peptidase M20A family. DapE subfamily. Homodimer. Zn(2+) serves as cofactor. Co(2+) is required as a cofactor.

The enzyme catalyses N-succinyl-(2S,6S)-2,6-diaminopimelate + H2O = (2S,6S)-2,6-diaminopimelate + succinate. Its pathway is amino-acid biosynthesis; L-lysine biosynthesis via DAP pathway; LL-2,6-diaminopimelate from (S)-tetrahydrodipicolinate (succinylase route): step 3/3. Catalyzes the hydrolysis of N-succinyl-L,L-diaminopimelic acid (SDAP), forming succinate and LL-2,6-diaminopimelate (DAP), an intermediate involved in the bacterial biosynthesis of lysine and meso-diaminopimelic acid, an essential component of bacterial cell walls. The protein is Succinyl-diaminopimelate desuccinylase of Haemophilus ducreyi (strain 35000HP / ATCC 700724).